Consider the following 825-residue polypeptide: Probable ATP-dependent RNA helicase DDX20 (825 aa).

A disordered region spans residues 27-50; it reads PVQAVEPTPASPWTQRTAHDIGGP. The Q motif signature appears at 63–91; that stretch reads ADFESLLLSRPVLEGLRAAGFERPSPVQL. Residues Arg85, Gln90, 107–114, and 110–115 each bind ATP; these read AKSGTGKT and GTGKTC. Residues 94–265 enclose the Helicase ATP-binding domain; the sequence is IPLGRCGLDL…TRYMRDPTFV (172 aa). The residue at position 188 (Ser188) is a Phosphoserine. The short motif at 212–215 is the DEAD box element; it reads DEAD. Ser270 is subject to Phosphoserine. Positions 300-449 constitute a Helicase C-terminal domain; the sequence is HLQELFSKVP…PIPPGLMEEC (150 aa). 2 stretches are compositionally biased toward polar residues: residues 465–475 and 484–504; these read SPTVATQSPKK and FQSQ…SASA. Disordered regions lie at residues 465–573 and 642–753; these read SPTV…PGSL and QMLV…EPQE. Residues Ser472, Ser501, and Ser506 each carry the phosphoserine modification. The segment covering 508 to 518 has biased composition (basic residues); it reads RPKHSKPKLPV. A compositionally biased stretch (polar residues) spans 547–571; it reads KNSVQTSVEDSSSNSQHQAKDSSPG. Phosphothreonine is present on Thr552. A phosphoserine mark is found at Ser561, Ser653, Ser655, Ser657, Ser673, Ser678, and Ser679. Over residues 646 to 668 the composition is skewed to low complexity; sequence SSSQSGDSESDSDSCSSRTSSQS. Residues Thr689 and Thr706 each carry the phosphothreonine modification. A compositionally biased stretch (polar residues) spans 698 to 711; the sequence is EQVQNGNDTPTQVE. The span at 733-744 shows a compositional bias: basic residues; it reads KQSRRNPARRSS.

Belongs to the DEAD box helicase family. DDX20 subfamily. In terms of assembly, part of the core SMN complex that contains SMN1, GEMIN2/SIP1, DDX20/GEMIN3, GEMIN4, GEMIN5, GEMIN6, GEMIN7, GEMIN8 and STRAP/UNRIP. Part of the SMN-Sm complex that contains SMN1, GEMIN2/SIP1, DDX20/GEMIN3, GEMIN4, GEMIN5, GEMIN6, GEMIN7, GEMIN8, STRAP/UNRIP and the Sm proteins SNRPB, SNRPD1, SNRPD2, SNRPD3, SNRPE, SNRPF and SNRPG. Interacts with SMN1; the interaction is direct. Interacts with GEMIN4; the interaction is direct. Interacts with GEMIN5. Interacts with SNUPN; the interaction is direct. Interacts with PPP4R2. Interacts with FOXL2. Interacts with NANOS1 and PUM2.

The protein resides in the cytoplasm. The protein localises to the nucleus. It is found in the gem. The catalysed reaction is ATP + H2O = ADP + phosphate + H(+). It catalyses the reaction a ribonucleoside 5'-triphosphate + H2O = a ribonucleoside 5'-diphosphate + phosphate + H(+). Functionally, the SMN complex catalyzes the assembly of small nuclear ribonucleoproteins (snRNPs), the building blocks of the spliceosome, and thereby plays an important role in the splicing of cellular pre-mRNAs. Most spliceosomal snRNPs contain a common set of Sm proteins SNRPB, SNRPD1, SNRPD2, SNRPD3, SNRPE, SNRPF and SNRPG that assemble in a heptameric protein ring on the Sm site of the small nuclear RNA to form the core snRNP (Sm core). In the cytosol, the Sm proteins SNRPD1, SNRPD2, SNRPE, SNRPF and SNRPG are trapped in an inactive 6S pICln-Sm complex by the chaperone CLNS1A that controls the assembly of the core snRNP. To assemble core snRNPs, the SMN complex accepts the trapped 5Sm proteins from CLNS1A forming an intermediate. Binding of snRNA inside 5Sm triggers eviction of the SMN complex, thereby allowing binding of SNRPD3 and SNRPB to complete assembly of the core snRNP. May also play a role in the metabolism of small nucleolar ribonucleoprotein (snoRNPs). The sequence is that of Probable ATP-dependent RNA helicase DDX20 (Ddx20) from Mus musculus (Mouse).